The sequence spans 379 residues: Queuine tRNA-ribosyltransferase (379 aa).

Asp91 serves as the catalytic Proton acceptor. Residues 91–95 (DSGGF), Asp145, Gln189, and Gly216 contribute to the substrate site. The RNA binding stretch occupies residues 247 to 253 (GVGKPED). The active-site Nucleophile is Asp266. Residues 271–275 (TRNAR) are RNA binding; important for wobble base 34 recognition. Residues Cys304, Cys306, Cys309, and His335 each contribute to the Zn(2+) site.

This sequence belongs to the queuine tRNA-ribosyltransferase family. In terms of assembly, homodimer. Within each dimer, one monomer is responsible for RNA recognition and catalysis, while the other monomer binds to the replacement base PreQ1. The cofactor is Zn(2+).

The catalysed reaction is 7-aminomethyl-7-carbaguanine + guanosine(34) in tRNA = 7-aminomethyl-7-carbaguanosine(34) in tRNA + guanine. It participates in tRNA modification; tRNA-queuosine biosynthesis. Its function is as follows. Catalyzes the base-exchange of a guanine (G) residue with the queuine precursor 7-aminomethyl-7-deazaguanine (PreQ1) at position 34 (anticodon wobble position) in tRNAs with GU(N) anticodons (tRNA-Asp, -Asn, -His and -Tyr). Catalysis occurs through a double-displacement mechanism. The nucleophile active site attacks the C1' of nucleotide 34 to detach the guanine base from the RNA, forming a covalent enzyme-RNA intermediate. The proton acceptor active site deprotonates the incoming PreQ1, allowing a nucleophilic attack on the C1' of the ribose to form the product. After dissociation, two additional enzymatic reactions on the tRNA convert PreQ1 to queuine (Q), resulting in the hypermodified nucleoside queuosine (7-(((4,5-cis-dihydroxy-2-cyclopenten-1-yl)amino)methyl)-7-deazaguanosine). The chain is Queuine tRNA-ribosyltransferase from Vibrio cholerae serotype O1 (strain ATCC 39315 / El Tor Inaba N16961).